The primary structure comprises 232 residues: Response regulator MprA (232 aa).

Positions 4–118 (RILVVDDDRA…ELLARMRALL (115 aa)) constitute a Response regulatory domain. Residue Asp-48 is modified to 4-aspartylphosphate. Positions 131-229 (SVAMTFSDLS…VRGVGYVLRE (99 aa)) form a DNA-binding region, ompR/PhoB-type.

In terms of processing, phosphorylated and dephosphorylated by MprB.

The protein localises to the cytoplasm. Functionally, member of the two-component regulatory system MprB/MprA which contributes to maintaining a balance among several systems involved in stress resistance and is required for establishment and maintenance of persistent infection in the host. Functions as a transcriptional regulator that recognizes a 19-bp nucleotide motif comprizing two loosely conserved 8-bp direct DNA-binding motif repeats separated by a 3-bp spacer region. This Mycobacterium ulcerans (strain Agy99) protein is Response regulator MprA (mprA).